A 326-amino-acid polypeptide reads, in one-letter code: Putative ribose-phosphate pyrophosphokinase 2 (326 aa).

Residues 43 to 45 and 102 to 103 contribute to the ATP site; these read DGE and RQ. Residue His-136 participates in Mg(2+) binding. D-ribose 5-phosphate is bound by residues Asp-225 and 229–233; that span reads NTGKT.

The protein belongs to the ribose-phosphate pyrophosphokinase family. Class I subfamily. In terms of assembly, homohexamer. Requires Mg(2+) as cofactor.

It localises to the cytoplasm. It carries out the reaction D-ribose 5-phosphate + ATP = 5-phospho-alpha-D-ribose 1-diphosphate + AMP + H(+). Its pathway is metabolic intermediate biosynthesis; 5-phospho-alpha-D-ribose 1-diphosphate biosynthesis; 5-phospho-alpha-D-ribose 1-diphosphate from D-ribose 5-phosphate (route I): step 1/1. Involved in the biosynthesis of the central metabolite phospho-alpha-D-ribosyl-1-pyrophosphate (PRPP) via the transfer of pyrophosphoryl group from ATP to 1-hydroxyl of ribose-5-phosphate (Rib-5-P). This is Putative ribose-phosphate pyrophosphokinase 2 from Streptococcus pyogenes serotype M3 (strain SSI-1).